Consider the following 305-residue polypeptide: Protoheme IX farnesyltransferase (305 aa).

9 consecutive transmembrane segments (helical) span residues 28–48, 52–72, 101–121, 122–142, 149–169, 174–194, 218–238, 240–260, and 283–303; these read IIELLLITTVPVMFLAEQGVP, LVLLTCLGGYLSAGGANALNM, LAFGITLAVVSTLLFGLTVNW, LSAWLSLGALLFYVVVYTMIL, NIVWGGIAGCLPVLIGWSSVT, WAPVILFLVMFFWTPPHYWPL, VVARQIVIYSWVMVGVSLLLT, LGYTGWFYTLVALLAGGFWLW, and LFHWSITYVSILFVAVAVDPF.

This sequence belongs to the UbiA prenyltransferase family. Protoheme IX farnesyltransferase subfamily.

It localises to the cell membrane. It carries out the reaction heme b + (2E,6E)-farnesyl diphosphate + H2O = Fe(II)-heme o + diphosphate. It functions in the pathway porphyrin-containing compound metabolism; heme O biosynthesis; heme O from protoheme: step 1/1. Converts heme B (protoheme IX) to heme O by substitution of the vinyl group on carbon 2 of heme B porphyrin ring with a hydroxyethyl farnesyl side group. This is Protoheme IX farnesyltransferase from Streptomyces avermitilis (strain ATCC 31267 / DSM 46492 / JCM 5070 / NBRC 14893 / NCIMB 12804 / NRRL 8165 / MA-4680).